The following is a 154-amino-acid chain: Myoglobin (154 aa).

Positions 2 to 148 (GLSDGEWQLV…FRNDIAAKYK (147 aa)) constitute a Globin domain. S4 is modified (phosphoserine). Nitrite is bound at residue H65. H65 contributes to the O2 binding site. T68 bears the Phosphothreonine mark. Position 94 (H94) interacts with heme b.

It belongs to the globin family. In terms of assembly, monomeric.

The protein resides in the cytoplasm. The protein localises to the sarcoplasm. The catalysed reaction is Fe(III)-heme b-[protein] + nitric oxide + H2O = Fe(II)-heme b-[protein] + nitrite + 2 H(+). It carries out the reaction H2O2 + AH2 = A + 2 H2O. Monomeric heme protein which primary function is to store oxygen and facilitate its diffusion within muscle tissues. Reversibly binds oxygen through a pentacoordinated heme iron and enables its timely and efficient release as needed during periods of heightened demand. Depending on the oxidative conditions of tissues and cells, and in addition to its ability to bind oxygen, it also has a nitrite reductase activity whereby it regulates the production of bioactive nitric oxide. Under stress conditions, like hypoxia and anoxia, it also protects cells against reactive oxygen species thanks to its pseudoperoxidase activity. The polypeptide is Myoglobin (MB) (Lepilemur mustelinus (Weasel sportive lemur)).